Here is a 255-residue protein sequence, read N- to C-terminus: Diphthine synthase (255 aa).

S-adenosyl-L-methionine is bound by residues leucine 9, aspartate 85, valine 88, 113 to 114, leucine 164, alanine 207, and histidine 232; that span reads SI.

Belongs to the diphthine synthase family. In terms of assembly, homodimer.

The enzyme catalyses 2-[(3S)-amino-3-carboxypropyl]-L-histidyl-[translation elongation factor 2] + 3 S-adenosyl-L-methionine = diphthine-[translation elongation factor 2] + 3 S-adenosyl-L-homocysteine + 3 H(+). It functions in the pathway protein modification; peptidyl-diphthamide biosynthesis. S-adenosyl-L-methionine-dependent methyltransferase that catalyzes the trimethylation of the amino group of the modified target histidine residue in translation elongation factor 2 (EF-2), to form an intermediate called diphthine. The three successive methylation reactions represent the second step of diphthamide biosynthesis. In Methanococcus maripaludis (strain C5 / ATCC BAA-1333), this protein is Diphthine synthase.